We begin with the raw amino-acid sequence, 430 residues long: MNTNIVILGTQWGDEGKGKIVDFLSSNSSYVVRYHGGHNAGHTLVVNGKKIILHLIPSGLLYPNVIGIISNGVVISPFELVKEIRMLEKNNHFINERLFISESAPLILPYHIAIDLAREKQLGINAIGTTGRGIGPAYEDKVARRALRVGDLKNTQKLSTKLKVIVDYYNHQLVSFYKQNPISYKEILKDLLKVKDLIYNMIKDTSAILHKAIEDKKRIIFEGAQGTLLDIDHGTYPYVTSSNSTTGGIITGTGVGPKNLGYILGITKAYTTRVGKGPFPTELFDDIDSYLSKKGQEFGSTTGRKRRTGWLDGVALRYSVKINSLSALCITKLDVLDDLKEIKICTSYKDVNTKKIYKDFPIFNLEDVTPVYEVHPGWMKKTSGIKKIEDLPKAACNYINRIEEIAQVPIDIISTGPDRSDTILLKSLFF.

GTP-binding positions include 13–19 and 41–43; these read GDEGKGK and GHT. D14 functions as the Proton acceptor in the catalytic mechanism. The Mg(2+) site is built by D14 and G41. IMP-binding positions include 14 to 17, 39 to 42, T130, R144, Q225, T240, and R304; these read DEGK and NAGH. Residue H42 is the Proton donor of the active site. 300–306 serves as a coordination point for substrate; the sequence is STTGRKR. Residues R306, 332–334, and 414–416 contribute to the GTP site; these read KLD and STG.

This sequence belongs to the adenylosuccinate synthetase family. In terms of assembly, homodimer. Mg(2+) is required as a cofactor.

The protein resides in the cytoplasm. The enzyme catalyses IMP + L-aspartate + GTP = N(6)-(1,2-dicarboxyethyl)-AMP + GDP + phosphate + 2 H(+). It functions in the pathway purine metabolism; AMP biosynthesis via de novo pathway; AMP from IMP: step 1/2. Plays an important role in the de novo pathway of purine nucleotide biosynthesis. Catalyzes the first committed step in the biosynthesis of AMP from IMP. In Buchnera aphidicola subsp. Schizaphis graminum (strain Sg), this protein is Adenylosuccinate synthetase.